Consider the following 557-residue polypeptide: MRSDIVKKGFERAPHRSLLRACGLTDEDFKKPFIGIANSYIDIIPGHVHLREFAQIVKEAVREAGGVPFEFNVIGVDDGIAMGHSGMHYSLPSRELIADSIETVVEAHKLDALVCIPNCDKIVPGMIMAAARLNIPVIFVSGGPMAAGHLPDGRPIDLATAFEAVGAVSRGLMTENELRVIEENACPSCGSCSGMFTANSMNCLSEVLGIALPGNGSILATDPRRQELARKAGEQIVKLVEADLKFRDIVNEETIENAFTLDIAMGGSSNTVLHLLAIANEAGIDFPVEKIDQISRRTPTLCKLAPASQYHMEDLDRAGGISAILKELSKKGLLHLDRPTVSLKTLGEVIEDAEIKDPDVIRPIHNPYSETGGLAVLFGNIAPYGGVVKAAAVDPKIMVHRGKAVCFDSEEEAIAGITGGKVKAGDVVVIRYEGPRGGPGMREMLSPTSAIMGMGLGDKVSLITDGRFSGATRGACIGHISPEAAAGGPIGIIKDGDEILIDIPNRKIELLISEEEFKKRMENFKPKKKEIKSRWLRRYSRFVTSANKGAVLSDSCE.

D78 lines the Mg(2+) pocket. C119 serves as a coordination point for [2Fe-2S] cluster. Residues D120 and K121 each coordinate Mg(2+). Residue K121 is modified to N6-carboxylysine. C192 contacts [2Fe-2S] cluster. Residue E443 participates in Mg(2+) binding. S469 (proton acceptor) is an active-site residue.

This sequence belongs to the IlvD/Edd family. Homodimer. [2Fe-2S] cluster is required as a cofactor. The cofactor is Mg(2+).

It catalyses the reaction (2R)-2,3-dihydroxy-3-methylbutanoate = 3-methyl-2-oxobutanoate + H2O. The enzyme catalyses (2R,3R)-2,3-dihydroxy-3-methylpentanoate = (S)-3-methyl-2-oxopentanoate + H2O. Its pathway is amino-acid biosynthesis; L-isoleucine biosynthesis; L-isoleucine from 2-oxobutanoate: step 3/4. The protein operates within amino-acid biosynthesis; L-valine biosynthesis; L-valine from pyruvate: step 3/4. In terms of biological role, functions in the biosynthesis of branched-chain amino acids. Catalyzes the dehydration of (2R,3R)-2,3-dihydroxy-3-methylpentanoate (2,3-dihydroxy-3-methylvalerate) into 2-oxo-3-methylpentanoate (2-oxo-3-methylvalerate) and of (2R)-2,3-dihydroxy-3-methylbutanoate (2,3-dihydroxyisovalerate) into 2-oxo-3-methylbutanoate (2-oxoisovalerate), the penultimate precursor to L-isoleucine and L-valine, respectively. The protein is Dihydroxy-acid dehydratase of Persephonella marina (strain DSM 14350 / EX-H1).